Consider the following 160-residue polypeptide: METALAEVQLSCLLCEQTFDATEKLDEHLPTHFPQPVSTGQTCDICGRTMRSSLELHQHYKRYHEAHVPNTEGHFQCQLCDKVFLLQDHLKVHVKIEHATDGYQPDEKSLDWQHYSPRSLDTTNDYKLDPILCPPPKRKYPPRSPFFNPNLWLGADNCFM.

3 C2H2-type zinc fingers span residues 10–32, 41–64, and 75–98; these read LSCL…LPTH, QTCD…KRYH, and FQCQ…KIEH. At Y115 the chain carries Phosphotyrosine. S116 bears the Phosphoserine mark.

Its subcellular location is the nucleus. Functionally, may be involved in transcriptional regulation. This is an uncharacterized protein from Drosophila melanogaster (Fruit fly).